The primary structure comprises 419 residues: Serine hydroxymethyltransferase (419 aa).

(6S)-5,6,7,8-tetrahydrofolate-binding positions include Leu-121 and 125–127 (GHL). Residue Lys-230 is modified to N6-(pyridoxal phosphate)lysine. (6S)-5,6,7,8-tetrahydrofolate is bound at residue 355–357 (SPF).

It belongs to the SHMT family. In terms of assembly, homodimer. The cofactor is pyridoxal 5'-phosphate.

It is found in the cytoplasm. The enzyme catalyses (6R)-5,10-methylene-5,6,7,8-tetrahydrofolate + glycine + H2O = (6S)-5,6,7,8-tetrahydrofolate + L-serine. Its pathway is one-carbon metabolism; tetrahydrofolate interconversion. It functions in the pathway amino-acid biosynthesis; glycine biosynthesis; glycine from L-serine: step 1/1. Catalyzes the reversible interconversion of serine and glycine with tetrahydrofolate (THF) serving as the one-carbon carrier. This reaction serves as the major source of one-carbon groups required for the biosynthesis of purines, thymidylate, methionine, and other important biomolecules. Also exhibits THF-independent aldolase activity toward beta-hydroxyamino acids, producing glycine and aldehydes, via a retro-aldol mechanism. The chain is Serine hydroxymethyltransferase from Streptococcus equi subsp. zooepidemicus (strain MGCS10565).